Reading from the N-terminus, the 333-residue chain is 2-haloacrylate reductase (333 aa).

NADP(+) is bound at residue Ala-153–Gly-159.

It belongs to the zinc-containing alcohol dehydrogenase family.

The catalysed reaction is (S)-2-chloropropanoate + NADP(+) = 2-chloroacrylate + NADPH + H(+). Involved in the degradation of unsaturated organohalogen compounds. Catalyzes the NADPH-dependent reduction of the carbon-carbon double bond of 2-chloroacrylate to produce (S)-2-chloropropionate, which is probably further metabolized to (R)-lactate by (S)-2-haloacid dehalogenase. Can also use 2-bromoacrylate as substrate. Does not act on acrylate, methacrylate, 1,4-benzoquinone and 1,4-naphthoquinone. This chain is 2-haloacrylate reductase, found in Burkholderia sp.